The sequence spans 123 residues: Peptide methionine sulfoxide reductase MsrA (123 aa).

The active site involves Cys-8.

It belongs to the MsrA Met sulfoxide reductase family.

It catalyses the reaction L-methionyl-[protein] + [thioredoxin]-disulfide + H2O = L-methionyl-(S)-S-oxide-[protein] + [thioredoxin]-dithiol. It carries out the reaction [thioredoxin]-disulfide + L-methionine + H2O = L-methionine (S)-S-oxide + [thioredoxin]-dithiol. Functionally, has an important function as a repair enzyme for proteins that have been inactivated by oxidation. Catalyzes the reversible oxidation-reduction of methionine sulfoxide in proteins to methionine. The sequence is that of Peptide methionine sulfoxide reductase MsrA from Thermoactinomyces vulgaris.